Reading from the N-terminus, the 428-residue chain is L-fucose-proton symporter (428 aa).

Transmembrane regions (helical) follow at residues 10–30, 51–71, 78–98, 100–120, 147–167, 204–224, 250–270, 288–308, 311–331, 339–359, 371–391, and 401–421; these read FIVP…ANDI, LVQL…ALFA, AGIL…WPAA, YEIF…LAFL, FNPL…LTNL, IALG…KMPA, EGVI…TFIV, IIAM…MKYL, EFML…VIFI, CLIL…GIAL, AGLV…GMII, and AVNF…IYGF.

This sequence belongs to the major facilitator superfamily. FHS transporter (TC 2.A.1.7) family.

The protein resides in the cell inner membrane. The catalysed reaction is L-fucose(in) + H(+)(in) = L-fucose(out) + H(+)(out). In terms of biological role, mediates the uptake of L-fucose across the boundary membrane with the concomitant transport of protons into the cell (symport system). The polypeptide is L-fucose-proton symporter (fucP) (Haemophilus influenzae (strain ATCC 51907 / DSM 11121 / KW20 / Rd)).